The sequence spans 276 residues: B3 domain-containing protein REM22 (276 aa).

Positions 11–115 form a DNA-binding region, TF-B3; the sequence is SETMSIQDTV…VFHFCVYEYG (105 aa). The segment at 141–164 is disordered; the sequence is GNEESTKGLEESPRRGGTSRRRAK. Basic and acidic residues predominate over residues 144–154; that stretch reads ESTKGLEESPR.

Its subcellular location is the nucleus. The chain is B3 domain-containing protein REM22 (REM22) from Arabidopsis thaliana (Mouse-ear cress).